Consider the following 370-residue polypeptide: Dihydroorotate dehydrogenase (370 aa).

Substrate-binding positions include Lys-82, 135-139, and Asn-200; that span reads NSFGM. Residue 82–83 coordinates FMN; that stretch reads KT. Residue Asn-200 participates in FMN binding. The Nucleophile role is filled by Cys-203. FMN is bound by residues Lys-241 and Ile-269. 270-271 lines the substrate pocket; sequence NT. FMN is bound by residues Gly-297, 328–329, and 350–351; these read GG and AT.

This sequence belongs to the dihydroorotate dehydrogenase family. It depends on FMN as a cofactor.

It carries out the reaction (S)-dihydroorotate + A = orotate + AH2. It participates in pyrimidine metabolism; UMP biosynthesis via de novo pathway. Functionally, catalyzes the conversion of dihydroorotate to orotate. Participates in the pyrimidine biosynthetic pathway. In Dictyostelium discoideum (Social amoeba), this protein is Dihydroorotate dehydrogenase (pyr4).